A 271-amino-acid chain; its full sequence is Shikimate dehydrogenase (NADP(+)) (271 aa).

Shikimate contacts are provided by residues 14 to 16 and T61; that span reads SKS. Residue K65 is the Proton acceptor of the active site. 2 residues coordinate shikimate: N86 and D102. Residues 126–130, 149–154, and M213 each bind NADP(+); these read GAGGA and NRTFSR. Y215 contacts shikimate. G238 is a binding site for NADP(+).

This sequence belongs to the shikimate dehydrogenase family. Homodimer.

It carries out the reaction shikimate + NADP(+) = 3-dehydroshikimate + NADPH + H(+). It participates in metabolic intermediate biosynthesis; chorismate biosynthesis; chorismate from D-erythrose 4-phosphate and phosphoenolpyruvate: step 4/7. Functionally, involved in the biosynthesis of the chorismate, which leads to the biosynthesis of aromatic amino acids. Catalyzes the reversible NADPH linked reduction of 3-dehydroshikimate (DHSA) to yield shikimate (SA). This Histophilus somni (strain 2336) (Haemophilus somnus) protein is Shikimate dehydrogenase (NADP(+)).